The sequence spans 674 residues: UvrABC system protein B (674 aa).

One can recognise a Helicase ATP-binding domain in the interval 26–183 (EGLEDGLAHQ…RRLAELQYTR (158 aa)). 39 to 46 (GVTGSGKT) is a binding site for ATP. A Beta-hairpin motif is present at residues 92-115 (YYDYYQPEAYVPSSDTFIEKDASV). The Helicase C-terminal domain occupies 431-597 (QVDDLLSEIR…GLNKKISDIL (167 aa)). Residues 634 to 669 (QKRIHQLEAQMQQHAQNLEFEEAAQVRDQLHQVREL) enclose the UVR domain.

This sequence belongs to the UvrB family. Forms a heterotetramer with UvrA during the search for lesions. Interacts with UvrC in an incision complex.

Its subcellular location is the cytoplasm. Functionally, the UvrABC repair system catalyzes the recognition and processing of DNA lesions. A damage recognition complex composed of 2 UvrA and 2 UvrB subunits scans DNA for abnormalities. Upon binding of the UvrA(2)B(2) complex to a putative damaged site, the DNA wraps around one UvrB monomer. DNA wrap is dependent on ATP binding by UvrB and probably causes local melting of the DNA helix, facilitating insertion of UvrB beta-hairpin between the DNA strands. Then UvrB probes one DNA strand for the presence of a lesion. If a lesion is found the UvrA subunits dissociate and the UvrB-DNA preincision complex is formed. This complex is subsequently bound by UvrC and the second UvrB is released. If no lesion is found, the DNA wraps around the other UvrB subunit that will check the other stand for damage. This chain is UvrABC system protein B, found in Erwinia tasmaniensis (strain DSM 17950 / CFBP 7177 / CIP 109463 / NCPPB 4357 / Et1/99).